Reading from the N-terminus, the 390-residue chain is Succinyl-diaminopimelate desuccinylase 1 (390 aa).

H76 contributes to the Zn(2+) binding site. The active site involves D78. D109 is a Zn(2+) binding site. Catalysis depends on E143, which acts as the Proton acceptor. Zn(2+) is bound by residues E144, E172, and H363.

Belongs to the peptidase M20A family. DapE subfamily. As to quaternary structure, homodimer. The cofactor is Zn(2+). Co(2+) serves as cofactor.

It catalyses the reaction N-succinyl-(2S,6S)-2,6-diaminopimelate + H2O = (2S,6S)-2,6-diaminopimelate + succinate. It functions in the pathway amino-acid biosynthesis; L-lysine biosynthesis via DAP pathway; LL-2,6-diaminopimelate from (S)-tetrahydrodipicolinate (succinylase route): step 3/3. Its function is as follows. Catalyzes the hydrolysis of N-succinyl-L,L-diaminopimelic acid (SDAP), forming succinate and LL-2,6-diaminopimelate (DAP), an intermediate involved in the bacterial biosynthesis of lysine and meso-diaminopimelic acid, an essential component of bacterial cell walls. In Alteromonas mediterranea (strain DSM 17117 / CIP 110805 / LMG 28347 / Deep ecotype), this protein is Succinyl-diaminopimelate desuccinylase 1.